Reading from the N-terminus, the 297-residue chain is MPLPADPSPTLSAYAHPERLVTADWLSAHMGAPGLAIVESDEDVLLYDVGHIPGAVKIDWHTDLNDPRVRDYINGEQFAELMDRKGIARDDTVVIYGDKSNWWAAYALWVFTLFGHADVRLLNGGRDLWLAERRETTLDVPTKTCTGYPVVQRNDAPIRAFRDDVLAILDAQPLIDVRSPEEYTGKRTHMPDYPEEGALRAGHIPTAVHIPWGKAADESGRFRSREELERLYDFINPDDQTVVYCRIGERSSHTWFVLTHLLGKADVRNYDGSWTEWGNAVRVPIVAGEEPGVVPVV.

Rhodanese domains are found at residues 31–138 (GAPG…ETTL) and 168–286 (ILDA…VPIV). Catalysis depends on Cys245, which acts as the Cysteine persulfide intermediate. Position 250 (Arg250) interacts with substrate.

It catalyses the reaction thiosulfate + hydrogen cyanide = thiocyanate + sulfite + 2 H(+). The sequence is that of Putative thiosulfate sulfurtransferase SseA (sseA) from Mycobacterium bovis (strain ATCC BAA-935 / AF2122/97).